Here is a 4391-residue protein sequence, read N- to C-terminus: Basement membrane-specific heparan sulfate proteoglycan core protein (4391 aa).

The N-terminal stretch at 1–21 is a signal peptide; sequence MGWRAAGALLLALLLHGRLLA. Threonine 42 carries an O-linked (GalNAc...) threonine glycan. O-linked (Xyl...) (heparan sulfate) serine glycosylation is found at serine 65, serine 71, and serine 76. The 112-residue stretch at 80–191 folds into the SEA domain; sequence QMVYFRALVN…QGFQFRRLGT (112 aa). Asparagine 89 is a glycosylation site (N-linked (GlcNAc...) asparagine). 4 consecutive LDL-receptor class A domains span residues 198–235, 284–320, 324–360, and 367–404; these read ACTEAEFACHSYNECVALEYRCDRRPDCRDMSDELNCE, PCGPQEAACRNGHCIPRDYLCDGQEDCEDGSDELDCG, PCEPNEFPCGNGHCALKLWRCDGDFDCEDRTDEANCP, and VCGPTQFRCVSTNMCIPASFHCDEESDCPDRSDEFGCM. 12 disulfides stabilise this stretch: cysteine 199–cysteine 212, cysteine 206–cysteine 225, cysteine 219–cysteine 234, cysteine 285–cysteine 297, cysteine 292–cysteine 310, cysteine 304–cysteine 319, cysteine 325–cysteine 337, cysteine 332–cysteine 350, cysteine 344–cysteine 359, cysteine 368–cysteine 381, cysteine 375–cysteine 394, and cysteine 388–cysteine 403. An Ig-like C2-type 1 domain is found at 405–504; sequence PPQVVTPPRE…VLELVPQRGP (100 aa). One can recognise a Laminin EGF-like 1; first part domain in the interval 521 to 530; it reads CFCFGITSVC. The region spanning 538 to 730 is the Laminin IV type A 1 domain; the sequence is DQIRLRFDQP…SHGRAHSVEE (193 aa). N-linked (GlcNAc...) asparagine glycosylation occurs at asparagine 554. The Laminin EGF-like 1; second part domain occupies 731–763; that stretch reads CRCPIGYSGLSCESCDAHFTRVPGGPYLGTCSG. 11 disulfide bridges follow: cysteine 764–cysteine 773, cysteine 766–cysteine 780, cysteine 783–cysteine 792, cysteine 795–cysteine 811, cysteine 814–cysteine 829, cysteine 816–cysteine 839, cysteine 842–cysteine 851, cysteine 854–cysteine 869, cysteine 879–cysteine 892, cysteine 894–cysteine 903, and cysteine 906–cysteine 921. Laminin EGF-like domains follow at residues 764–813 and 814–871; these read CNCN…SCRP and CPCP…KCRP. Residues 879–923 form the Laminin EGF-like 4; truncated domain; it reads CDERGSMGTSGEACRCKNNVVGRLCNECADGSFHLSTRNPDGCLK. One can recognise a Laminin EGF-like 5; first part domain in the interval 924–933; that stretch reads CFCMGVSRHC. The region spanning 941–1125 is the Laminin IV type A 2 domain; sequence AQLHGASEEP…GQDPALEVEQ (185 aa). In terms of domain architecture, Laminin EGF-like 5; second part spans 1126–1158; it reads CSCPPGYRGPSCQDCDTGYTRTPSGLYLGTCER. 12 disulfide bridges follow: cysteine 1159-cysteine 1168, cysteine 1161-cysteine 1175, cysteine 1178-cysteine 1187, cysteine 1190-cysteine 1206, cysteine 1209-cysteine 1224, cysteine 1211-cysteine 1234, cysteine 1237-cysteine 1246, cysteine 1249-cysteine 1263, cysteine 1275-cysteine 1287, cysteine 1277-cysteine 1293, cysteine 1295-cysteine 1304, and cysteine 1307-cysteine 1322. Laminin EGF-like domains lie at 1159-1208, 1209-1265, and 1275-1324; these read CSCH…DCQL, CPCY…PCQR, and CNCD…GCLP. Residues 1325–1334 enclose the Laminin EGF-like 9; first part domain; sequence CFCMGITQQC. The region spanning 1344 to 1529 is the Laminin IV type A 3 domain; it reads ISTHFAPGDF…NRPRALEVEE (186 aa). The 33-residue stretch at 1530–1562 folds into the Laminin EGF-like 9; second part domain; that stretch reads CRCPPGYIGLSCQDCAPGYTRTGSGLYLGHCEL. Disulfide bonds link cysteine 1563/cysteine 1572, cysteine 1565/cysteine 1579, cysteine 1582/cysteine 1591, cysteine 1594/cysteine 1610, cysteine 1613/cysteine 1628, cysteine 1615/cysteine 1638, cysteine 1641/cysteine 1650, and cysteine 1653/cysteine 1668. Laminin EGF-like domains follow at residues 1563-1612 and 1613-1670; these read CECN…DCQP and CACP…QCLP. Ig-like C2-type domains follow at residues 1677 to 1771, 1772 to 1865, 1866 to 1955, 1956 to 2051, 2052 to 2151, 2152 to 2244, 2245 to 2340, 2341 to 2436, 2437 to 2533, 2534 to 2629, 2630 to 2726, 2727 to 2826, 2827 to 2924, 2925 to 3021, 3022 to 3112, 3113 to 3211, 3212 to 3298, 3299 to 3399, 3400 to 3488, 3489 to 3574, and 3575 to 3662; these read LVVE…SKPI, TVTV…TLSA, PVVS…GGGG, PRVQ…ASPP, PVKI…PGST, RPIR…PGPI, PPVR…AGST, QPIR…LGVT, PTVR…QGVA, YPVR…PSVS, PPIR…PGSS, MPIR…PGGA, PPIR…PGLA, QPIY…RLRS, PVIS…HGPP, TVSV…APGA, PQVQ…VESP, PYAT…AGST, PTVQ…ALPS, VLIN…LVQA, and LPQI…PERV. An N-linked (GlcNAc...) asparagine glycan is attached at asparagine 1755. Asparagine 2121 carries an N-linked (GlcNAc...) asparagine glycan. The segment at 2994 to 3014 is disordered; it reads ASGPGPEQEASFTVTVPPSEG. An O-linked (Xyl...) (chondroitin sulfate) serine glycan is attached at serine 2995. Polar residues predominate over residues 3003-3014; it reads ASFTVTVPPSEG. N-linked (GlcNAc...) asparagine glycosylation is found at asparagine 3072 and asparagine 3105. Asparagine 3279 is a glycosylation site (N-linked (GlcNAc...) asparagine). Residues 3663 to 3843 form the Laminin G-like 1 domain; it reads VPYFTQTPYS…DLNLTAHGIS (181 aa). Asparagine 3780 and asparagine 3836 each carry an N-linked (GlcNAc...) asparagine glycan. 7 disulfide bridges follow: cysteine 3819–cysteine 3845, cysteine 3848–cysteine 3859, cysteine 3853–cysteine 3869, cysteine 3871–cysteine 3880, cysteine 3888–cysteine 3899, cysteine 3893–cysteine 3910, and cysteine 3912–cysteine 3921. EGF-like domains are found at residues 3844 to 3881 and 3884 to 3922; these read HCPTCRDRPCQNGGQCHDSESSSYVCVCPAGFTGSRCE and QALHCHPEACGPDATCVNRPDGRGYTCRCHLGRSGLRCE. The Laminin G-like 2 domain occupies 3928–4103; the sequence is TTPSLSGAGS…LGSQGIGQCY (176 aa). A glycan (O-linked (Xyl...) (chondroitin sulfate) serine) is linked at serine 3933. The N-linked (GlcNAc...) asparagine glycan is linked to asparagine 4068. Intrachain disulfides connect cysteine 4076–cysteine 4102, cysteine 4108–cysteine 4119, cysteine 4113–cysteine 4129, cysteine 4131–cysteine 4140, cysteine 4147–cysteine 4159, cysteine 4153–cysteine 4164, and cysteine 4166–cysteine 4175. EGF-like domains lie at 4104–4141 and 4143–4176; these read DSSPCERQPCQHGATCMPAGEYEFQCLCRDGFKGDLCE and EENPCQLREPCLHGGTCQGTRCLCLPGFSGPRCQ. A mediates motor neuron attachment region spans residues 4149–4151; the sequence is LRE. O-linked (Xyl...) (chondroitin sulfate) serine glycans are attached at residues serine 4179 and serine 4193. One can recognise a Laminin G-like 3 domain in the interval 4201-4389; that stretch reads QYGAYFHDDG…AQAGANTRPC (189 aa). Residues aspartate 4258 and leucine 4275 each coordinate Ca(2+). Positions 4299 to 4301 are mediates motor neuron attachment; sequence LRE. Positions 4325 and 4327 each coordinate Ca(2+). A disulfide bond links cysteine 4355 and cysteine 4389. Residues 4364–4391 are disordered; it reads ARPGAPPPQPLDLQHRAQAGANTRPCPS.

As to quaternary structure, has a strong tendency to aggregate in dimers or stellate structures. Interacts with other basement membrane components such as laminin, prolargin and collagen type IV. Interacts with COL13A1. Interacts with FGFBP1. Interacts with VWA1. Interacts (via C-terminus) with ECM1 (via C-terminus). Interacts with SVEP1. Post-translationally, proteolytic processing produces the C-terminal angiogenic peptide, endorepellin. This peptide can be further processed to produce the LG3 peptide. In terms of processing, O-glycosylated with core 1 or possibly core 8 glycans. Contains three heparan sulfate chains. Also contains chondroitin sulfate. As to expression, detected in cerebrospinal fluid, fibroblasts and urine (at protein level).

Its subcellular location is the secreted. The protein resides in the extracellular space. It localises to the extracellular matrix. The protein localises to the basement membrane. Functionally, integral component of basement membranes. Component of the glomerular basement membrane (GBM), responsible for the fixed negative electrostatic membrane charge, and which provides a barrier which is both size- and charge-selective. It serves as an attachment substrate for cells. Plays essential roles in vascularization. Critical for normal heart development and for regulating the vascular response to injury. Also required for avascular cartilage development. Anti-angiogenic and anti-tumor peptide that inhibits endothelial cell migration, collagen-induced endothelial tube morphogenesis and blood vessel growth in the chorioallantoic membrane. Blocks endothelial cell adhesion to fibronectin and type I collagen. Anti-tumor agent in neovascularization. Interaction with its ligand, integrin alpha2/beta1, is required for the anti-angiogenic properties. Evokes a reduction in phosphorylation of receptor tyrosine kinases via alpha2/beta1 integrin-mediated activation of the tyrosine phosphatase, PTPN6. In terms of biological role, has anti-angiogenic properties that require binding of calcium ions for full activity. This is Basement membrane-specific heparan sulfate proteoglycan core protein (HSPG2) from Homo sapiens (Human).